The sequence spans 412 residues: Small ribosomal subunit protein mL103 (rPPR7) (412 aa).

The transit peptide at 1–14 (MASSRISLRLVRRF) directs the protein to the mitochondrion. Positions 21–37 (GTTTAPSSGKISVSKAK) are enriched in polar residues. Residues 21–43 (GTTTAPSSGKISVSKAKSTLRKE) form a disordered region. 8 PPR repeats span residues 101–135 (EEPF…GTPR), 136–166 (SAVS…IPQR), 173–207 (DKIS…GMEV), 208–242 (TTIA…GCEL), 243–276 (DNAA…GLKP), 277–311 (DTIS…NCAP), 312–346 (NAAT…HKIP), and 347–377 (DFNT…VKKK).

Belongs to the PPR family. P subfamily. As to quaternary structure, component of the mitochondrial ribosome small subunit.

It is found in the mitochondrion. In Arabidopsis thaliana (Mouse-ear cress), this protein is Small ribosomal subunit protein mL103 (rPPR7).